Consider the following 371-residue polypeptide: Histidinol-phosphate aminotransferase (371 aa).

Lysine 228 carries the post-translational modification N6-(pyridoxal phosphate)lysine.

The protein belongs to the class-II pyridoxal-phosphate-dependent aminotransferase family. Histidinol-phosphate aminotransferase subfamily. Homodimer. It depends on pyridoxal 5'-phosphate as a cofactor.

The enzyme catalyses L-histidinol phosphate + 2-oxoglutarate = 3-(imidazol-4-yl)-2-oxopropyl phosphate + L-glutamate. Its pathway is amino-acid biosynthesis; L-histidine biosynthesis; L-histidine from 5-phospho-alpha-D-ribose 1-diphosphate: step 7/9. This chain is Histidinol-phosphate aminotransferase, found in Thermosynechococcus vestitus (strain NIES-2133 / IAM M-273 / BP-1).